Here is a 251-residue protein sequence, read N- to C-terminus: Cytochrome c oxidase subunit 2 (251 aa).

Positions 1–15 (MLTFLSNLNNMIIMN) are cleaved as a signal peptide. Residues 16–42 (DVPTPYGVYFQDSATPNQEGILELHDN) are Mitochondrial intermembrane-facing. The chain crosses the membrane as a helical span at residues 43 to 64 (IMFYLLVILGLVSWLLFTITRT). Residues 65-82 (YSKNPIAYKYIKHGQTIE) are Mitochondrial matrix-facing. A helical membrane pass occupies residues 83–107 (IIWTIFPAVVLLIIAFPSFILLYLC). At 108-251 (DEVISPAMTI…PSFLEWLNEQ (144 aa)) the chain is on the mitochondrial intermembrane side. Positions 186, 221, 223, 225, 229, and 232 each coordinate Cu cation. Glutamate 223 contacts Mg(2+).

The protein belongs to the cytochrome c oxidase subunit 2 family. Component of the cytochrome c oxidase (complex IV, CIV), a multisubunit enzyme composed of a catalytic core of 3 subunits and several supernumerary subunits. The complex exists as a monomer or a dimer and forms supercomplexes (SCs) in the inner mitochondrial membrane with ubiquinol-cytochrome c oxidoreductase (cytochrome b-c1 complex, complex III, CIII). Cu cation is required as a cofactor. Post-translationally, the signal sequence of COX2 is processed by IMP1.

The protein resides in the mitochondrion inner membrane. The catalysed reaction is 4 Fe(II)-[cytochrome c] + O2 + 8 H(+)(in) = 4 Fe(III)-[cytochrome c] + 2 H2O + 4 H(+)(out). Its function is as follows. Component of the cytochrome c oxidase, the last enzyme in the mitochondrial electron transport chain which drives oxidative phosphorylation. The respiratory chain contains 3 multisubunit complexes succinate dehydrogenase (complex II, CII), ubiquinol-cytochrome c oxidoreductase (cytochrome b-c1 complex, complex III, CIII) and cytochrome c oxidase (complex IV, CIV), that cooperate to transfer electrons derived from NADH and succinate to molecular oxygen, creating an electrochemical gradient over the inner membrane that drives transmembrane transport and the ATP synthase. Cytochrome c oxidase is the component of the respiratory chain that catalyzes the reduction of oxygen to water. Electrons originating from reduced cytochrome c in the intermembrane space (IMS) are transferred via the dinuclear copper A center (CU(A)) of subunit 2 and heme A of subunit 1 to the active site in subunit 1, a binuclear center (BNC) formed by heme A3 and copper B (CU(B)). The BNC reduces molecular oxygen to 2 water molecules using 4 electrons from cytochrome c in the IMS and 4 protons from the mitochondrial matrix. The chain is Cytochrome c oxidase subunit 2 (COX2) from Lachancea kluyveri (strain ATCC 58438 / CBS 3082 / BCRC 21498 / NBRC 1685 / JCM 7257 / NCYC 543 / NRRL Y-12651) (Yeast).